The primary structure comprises 265 residues: 1-(5-phosphoribosyl)-5-[(5-phosphoribosylamino)methylideneamino] imidazole-4-carboxamide isomerase (265 aa).

Residue Asp-8 is the Proton acceptor of the active site. Asp-139 acts as the Proton donor in catalysis.

This sequence belongs to the HisA/HisF family.

The protein resides in the cytoplasm. The catalysed reaction is 1-(5-phospho-beta-D-ribosyl)-5-[(5-phospho-beta-D-ribosylamino)methylideneamino]imidazole-4-carboxamide = 5-[(5-phospho-1-deoxy-D-ribulos-1-ylimino)methylamino]-1-(5-phospho-beta-D-ribosyl)imidazole-4-carboxamide. It participates in amino-acid biosynthesis; L-histidine biosynthesis; L-histidine from 5-phospho-alpha-D-ribose 1-diphosphate: step 4/9. This chain is 1-(5-phosphoribosyl)-5-[(5-phosphoribosylamino)methylideneamino] imidazole-4-carboxamide isomerase, found in Herminiimonas arsenicoxydans.